The primary structure comprises 786 residues: Endonuclease MutS2 (786 aa).

An ATP-binding site is contributed by 335–342 (GPNTGGKT). The Smr domain occupies 711–786 (LDLRGERFEN…GLGVTVVELK (76 aa)).

This sequence belongs to the DNA mismatch repair MutS family. MutS2 subfamily. In terms of assembly, homodimer. Binds to stalled ribosomes, contacting rRNA.

Its function is as follows. Endonuclease that is involved in the suppression of homologous recombination and thus may have a key role in the control of bacterial genetic diversity. Functionally, acts as a ribosome collision sensor, splitting the ribosome into its 2 subunits. Detects stalled/collided 70S ribosomes which it binds and splits by an ATP-hydrolysis driven conformational change. Acts upstream of the ribosome quality control system (RQC), a ribosome-associated complex that mediates the extraction of incompletely synthesized nascent chains from stalled ribosomes and their subsequent degradation. Probably generates substrates for RQC. This is Endonuclease MutS2 from Bacillus cereus (strain AH820).